We begin with the raw amino-acid sequence, 35 residues long: GFGTILKALAKIAGKVVKKLATKPGATYMLKENLK.

Lysine amide is present on K35.

In terms of tissue distribution, expressed by the venom gland.

It localises to the secreted. In Cupiennius salei (American wandering spider), this protein is Cupiennin-2a.